The primary structure comprises 354 residues: UDP-N-acetylglucosamine--N-acetylmuramyl-(pentapeptide) pyrophosphoryl-undecaprenol N-acetylglucosamine transferase (354 aa).

Positions 196 and 288 each coordinate UDP-N-acetyl-alpha-D-glucosamine.

The protein belongs to the glycosyltransferase 28 family. MurG subfamily.

It is found in the cell membrane. It catalyses the reaction Mur2Ac(oyl-L-Ala-gamma-D-Glu-L-Lys-D-Ala-D-Ala)-di-trans,octa-cis-undecaprenyl diphosphate + UDP-N-acetyl-alpha-D-glucosamine = beta-D-GlcNAc-(1-&gt;4)-Mur2Ac(oyl-L-Ala-gamma-D-Glu-L-Lys-D-Ala-D-Ala)-di-trans,octa-cis-undecaprenyl diphosphate + UDP + H(+). The protein operates within cell wall biogenesis; peptidoglycan biosynthesis. Cell wall formation. Catalyzes the transfer of a GlcNAc subunit on undecaprenyl-pyrophosphoryl-MurNAc-pentapeptide (lipid intermediate I) to form undecaprenyl-pyrophosphoryl-MurNAc-(pentapeptide)GlcNAc (lipid intermediate II). The sequence is that of UDP-N-acetylglucosamine--N-acetylmuramyl-(pentapeptide) pyrophosphoryl-undecaprenol N-acetylglucosamine transferase from Streptococcus suis (strain 98HAH33).